A 225-amino-acid chain; its full sequence is Ribulose-phosphate 3-epimerase (225 aa).

Ser-10 serves as a coordination point for substrate. Positions 35, 37, and 68 each coordinate a divalent metal cation. Asp-37 acts as the Proton acceptor in catalysis. Substrate-binding positions include His-68, 144-147 (GFGG), and 175-177 (DGG). Asp-175 contributes to the a divalent metal cation binding site. Catalysis depends on Asp-175, which acts as the Proton donor.

It belongs to the ribulose-phosphate 3-epimerase family. It depends on a divalent metal cation as a cofactor.

It carries out the reaction D-ribulose 5-phosphate = D-xylulose 5-phosphate. The protein operates within carbohydrate degradation. In terms of biological role, catalyzes the reversible epimerization of D-ribulose 5-phosphate to D-xylulose 5-phosphate. The protein is Ribulose-phosphate 3-epimerase of Rhodospirillum rubrum.